We begin with the raw amino-acid sequence, 178 residues long: MRVKTFVILCCALQYVAYTNANINDFDEDYFGSDVTVQSSNTTDEIIRDASGAVIEEEITTKKMQRKNKNHGILGKNEKMIKTFVITTDSDGNESIVEEDVLMKTLSDGTVAQSYVAADAGAYSQSGPYVSNSGYSTHQGYRSDFASAAVGAGAGAGAAAGSGAGAGAGYGAASGAGA.

The first 21 residues, 1 to 21 (MRVKTFVILCCALQYVAYTNA), serve as a signal peptide directing secretion. The interval 149–178 (AVGAGAGAGAAAGSGAGAGAGYGAASGAGA) is highly repetitive.

As to quaternary structure, silk fibroin elementary unit consists in a disulfide-linked heavy and light chain and a p25 glycoprotein in molar ratios of 6:6:1. This results in a complex of approximately 2.3 MDa. Post-translationally, the interchain disulfide bridge is essential for the intracellular transport and secretion of fibroin. As to expression, produced exclusively in the posterior (PSG) section of silk glands, which are essentially modified salivary glands.

Its function is as follows. Core component of the silk filament; a strong, insoluble and chemically inert fiber. This is Fibroin heavy chain (FIBH) from Bombyx mandarina (Wild silk moth).